We begin with the raw amino-acid sequence, 371 residues long: Cell division control protein 3 (371 aa).

The Septin-type G domain occupies 22–307 (AGIDFNIMTV…DEYKTREIGL (286 aa)). The tract at residues 32–39 (GSNGLGKS) is G1 motif. Residues 32 to 39 (GSNGLGKS), Gly116, 195 to 203 (KSDLLSDSE), and Arg257 each bind GTP. The interval 113–116 (EVDG) is G3 motif. The G4 motif stretch occupies residues 194-197 (GKSD).

Belongs to the TRAFAC class TrmE-Era-EngA-EngB-Septin-like GTPase superfamily. Septin GTPase family. In terms of assembly, component of the septin complex.

Its function is as follows. Septins are GTPases involved in cytokinesis. The septins localize to the site of cleavage and act as a structural scaffold that recruits different components involved in diverse processes at specific stages during the cell cycle. Septins are also involved in cell morphogenesis, chitin deposition, cell cycle regulation, cell compartmentalization and spore wall formation. The chain is Cell division control protein 3 (CDC3) from Encephalitozoon cuniculi (strain GB-M1) (Microsporidian parasite).